A 324-amino-acid polypeptide reads, in one-letter code: tRNA U34 carboxymethyltransferase (324 aa).

Carboxy-S-adenosyl-L-methionine-binding positions include K92, W106, K111, G131, 153 to 155 (DPS), M197, Y201, and R316.

Belongs to the class I-like SAM-binding methyltransferase superfamily. CmoB family. Homotetramer.

It catalyses the reaction carboxy-S-adenosyl-L-methionine + 5-hydroxyuridine(34) in tRNA = 5-carboxymethoxyuridine(34) in tRNA + S-adenosyl-L-homocysteine + H(+). Catalyzes carboxymethyl transfer from carboxy-S-adenosyl-L-methionine (Cx-SAM) to 5-hydroxyuridine (ho5U) to form 5-carboxymethoxyuridine (cmo5U) at position 34 in tRNAs. This Hahella chejuensis (strain KCTC 2396) protein is tRNA U34 carboxymethyltransferase.